The following is a 389-amino-acid chain: tRNA (cytosine(72)-C(5))-methyltransferase (389 aa).

The 76-residue stretch at 92 to 167 (LPVVVANKYA…LAVEVTLPKF (76 aa)) folds into the PUA domain. S-adenosyl-L-methionine contacts are provided by residues 209–215 (AAAPGGK), aspartate 233, arginine 238, aspartate 260, aspartate 277, and tyrosine 304. The Nucleophile role is filled by cysteine 327.

The protein belongs to the class I-like SAM-binding methyltransferase superfamily. RsmB/NOP family.

It carries out the reaction cytidine(72) in tRNA + S-adenosyl-L-methionine = 5-methylcytidine(72) in tRNA + S-adenosyl-L-homocysteine + H(+). The catalysed reaction is cytidine(72) in tRNA(Thr) + S-adenosyl-L-methionine = 5-methylcytidine(72) in tRNA(Thr) + S-adenosyl-L-homocysteine + H(+). It catalyses the reaction cytidine(72) in tRNA(Cys) + S-adenosyl-L-methionine = 5-methylcytidine(72) in tRNA(Cys) + S-adenosyl-L-homocysteine + H(+). Functionally, S-adenosyl-L-methionine-dependent methyltransferase that specifically methylates the C5 position of cytosine 72 in several tRNAs. This modification appears to slightly promote the thermal stability of P.horikoshii tRNAs, but does not affect their amino acid accepting activity. Four elements in the acceptor stems of tRNAs are essential for substrate recognition by this enzyme: the target site C72, the 3'-CCA terminus, U73 or G73, and the second base pair C2:G71. This is tRNA (cytosine(72)-C(5))-methyltransferase from Pyrococcus horikoshii (strain ATCC 700860 / DSM 12428 / JCM 9974 / NBRC 100139 / OT-3).